The sequence spans 351 residues: Cytosolic sulfotransferase 11 (351 aa).

98-103 (KGGTTW) is a binding site for 3'-phosphoadenylyl sulfate. The active-site Proton acceptor is the His163. 3'-phosphoadenylyl sulfate is bound by residues Arg184, Ser192, Tyr250, and 316-318 (RKG).

The protein belongs to the sulfotransferase 1 family.

Its subcellular location is the cytoplasm. Its function is as follows. Sulfotransferase that utilizes 3'-phospho-5'-adenylyl sulfate (PAPS) as sulfonate donor. The chain is Cytosolic sulfotransferase 11 (SOT11) from Arabidopsis thaliana (Mouse-ear cress).